We begin with the raw amino-acid sequence, 592 residues long: Colicin-A (592 aa).

2 stretches are compositionally biased toward gly residues: residues 1-13 (MPGFNYGGKGDGT) and 23-34 (PEPGGGSHGNSG). Disordered stretches follow at residues 1–57 (MPGF…PGDS) and 373–395 (RQRQAEEAERQRQAMEVAEKAKD). 2 helical membrane-spanning segments follow: residues 528-548 (WVLSGIASSVALGIFSATLGA) and 555-575 (VPAIAVGIAGILLAAVVGALI).

The protein belongs to the channel forming colicin family.

It is found in the cell membrane. In terms of biological role, this colicin is a channel-forming colicin. This class of transmembrane toxins depolarize the cytoplasmic membrane, leading to dissipation of cellular energy. Its function is as follows. Colicins are polypeptide toxins produced by and active against E.coli and closely related bacteria. This chain is Colicin-A (caa), found in Citrobacter freundii.